The following is a 214-amino-acid chain: Large ribosomal subunit protein uL16 (214 aa).

A Citrulline modification is found at arginine 32. A Glycyl lysine isopeptide (Lys-Gly) (interchain with G-Cter in SUMO2) cross-link involves residue lysine 175. A Glycyl lysine isopeptide (Lys-Gly) (interchain with G-Cter in ubiquitin) cross-link involves residue lysine 188.

The protein belongs to the universal ribosomal protein uL16 family. In terms of assembly, component of the large ribosomal subunit. Mature ribosomes consist of a small (40S) and a large (60S) subunit. The 40S subunit contains about 33 different proteins and 1 molecule of RNA (18S). The 60S subunit contains about 49 different proteins and 3 molecules of RNA (28S, 5.8S and 5S). In terms of processing, citrullinated by PADI4. Ufmylated by UFL1.

The protein localises to the cytoplasm. Functionally, component of the large ribosomal subunit. Plays a role in the formation of actively translating ribosomes. May play a role in the embryonic brain development. This is Large ribosomal subunit protein uL16 from Bos taurus (Bovine).